Reading from the N-terminus, the 315-residue chain is MSSSALRIGTRASRLALWQAEWVQQQLETLHPGLSVVLVPITTKGDKILDVPLAKVGGKGLFVKEIEEALYDGSIDLAVHSMKDVPSVLPPGLILPCIPPREDPRDALVTPDGRSFAQLPQGARIGTSALRRQAQLLHRRPDLDIVSLRGNVETRLRKMEEEDMDGIVLAAAGLKRLELAERIAEYLSVDVSLPAIGQGALGLECREGDDRTLELIAPLHDADTAVAVRAERAFLRRLNGGCQVPLAAHATVAEQTLTMVGLVAEVDGGSLIKETLAAPVAQAEAVGCQLAETLLARGADRILAALDITPTPLVP.

S-(dipyrrolylmethanemethyl)cysteine is present on cysteine 242.

Belongs to the HMBS family. In terms of assembly, monomer. Dipyrromethane is required as a cofactor.

The catalysed reaction is 4 porphobilinogen + H2O = hydroxymethylbilane + 4 NH4(+). It participates in porphyrin-containing compound metabolism; protoporphyrin-IX biosynthesis; coproporphyrinogen-III from 5-aminolevulinate: step 2/4. Functionally, tetrapolymerization of the monopyrrole PBG into the hydroxymethylbilane pre-uroporphyrinogen in several discrete steps. This Syntrophotalea carbinolica (strain DSM 2380 / NBRC 103641 / GraBd1) (Pelobacter carbinolicus) protein is Porphobilinogen deaminase.